The chain runs to 353 residues: Chorismate synthase (353 aa).

An NADP(+)-binding site is contributed by Arg-48. FMN-binding positions include 128–130, Gly-280, 295–299, and Arg-321; these read RAS and KPIPS.

Belongs to the chorismate synthase family. As to quaternary structure, homotetramer. The cofactor is FMNH2.

It catalyses the reaction 5-O-(1-carboxyvinyl)-3-phosphoshikimate = chorismate + phosphate. It participates in metabolic intermediate biosynthesis; chorismate biosynthesis; chorismate from D-erythrose 4-phosphate and phosphoenolpyruvate: step 7/7. In terms of biological role, catalyzes the anti-1,4-elimination of the C-3 phosphate and the C-6 proR hydrogen from 5-enolpyruvylshikimate-3-phosphate (EPSP) to yield chorismate, which is the branch point compound that serves as the starting substrate for the three terminal pathways of aromatic amino acid biosynthesis. This reaction introduces a second double bond into the aromatic ring system. This is Chorismate synthase from Nitratidesulfovibrio vulgaris (strain DSM 19637 / Miyazaki F) (Desulfovibrio vulgaris).